Here is an 88-residue protein sequence, read N- to C-terminus: ATP synthase F(0) complex subunit f, mitochondrial (88 aa).

An N-acetylalanine modification is found at Ala2. Ser3 bears the Phosphoserine mark. N6-acetyllysine is present on Lys16. A helical membrane pass occupies residues 62 to 79; it reads MVLAAYVVFNYCRSYKEL.

Belongs to the ATPase F chain family. Component of the ATP synthase complex composed at least of ATP5F1A/subunit alpha, ATP5F1B/subunit beta, ATP5MC1/subunit c (homooctomer), MT-ATP6/subunit a, MT-ATP8/subunit 8, ATP5ME/subunit e, ATP5MF/subunit f, ATP5MG/subunit g, ATP5MK/subunit k, ATP5MJ/subunit j, ATP5F1C/subunit gamma, ATP5F1D/subunit delta, ATP5F1E/subunit epsilon, ATP5PF/subunit F6, ATP5PB/subunit b, ATP5PD/subunit d, ATP5PO/subunit OSCP. ATP synthase complex consists of a soluble F(1) head domain (subunits alpha(3) and beta(3)) - the catalytic core - and a membrane F(0) domain - the membrane proton channel (subunits c, a, 8, e, f, g, k and j). These two domains are linked by a central stalk (subunits gamma, delta, and epsilon) rotating inside the F1 region and a stationary peripheral stalk (subunits F6, b, d, and OSCP).

Its subcellular location is the mitochondrion. The protein localises to the mitochondrion inner membrane. Its function is as follows. Subunit f, of the mitochondrial membrane ATP synthase complex (F(1)F(0) ATP synthase or Complex V) that produces ATP from ADP in the presence of a proton gradient across the membrane which is generated by electron transport complexes of the respiratory chain. ATP synthase complex consist of a soluble F(1) head domain - the catalytic core - and a membrane F(1) domain - the membrane proton channel. These two domains are linked by a central stalk rotating inside the F(1) region and a stationary peripheral stalk. During catalysis, ATP synthesis in the catalytic domain of F(1) is coupled via a rotary mechanism of the central stalk subunits to proton translocation. In vivo, can only synthesize ATP although its ATP hydrolase activity can be activated artificially in vitro. Part of the complex F(0) domain. This chain is ATP synthase F(0) complex subunit f, mitochondrial, found in Sus scrofa (Pig).